The primary structure comprises 154 residues: Actin-related protein 2/3 complex subunit 5 (154 aa).

T142 is subject to Phosphothreonine.

It belongs to the ARPC5 family. In terms of assembly, component of the Arp2/3 complex composed of ARP2, ARP3, ARC40/p41-ARC, ARC35/p34-ARC, ARC18/p21-ARC, ARC19/p20-ARC and ARC16/p16-ARC.

Its subcellular location is the cytoplasm. The protein localises to the cytoskeleton. It is found in the actin patch. In terms of biological role, functions as a component of the Arp2/3 complex which is involved in regulation of actin polymerization and together with an activating nucleation-promoting factor (NPF) mediates the formation of branched actin networks. In Saccharomyces cerevisiae (strain ATCC 204508 / S288c) (Baker's yeast), this protein is Actin-related protein 2/3 complex subunit 5 (ARC15).